We begin with the raw amino-acid sequence, 420 residues long: Dual-specificity RNA methyltransferase RlmN (420 aa).

The active-site Proton acceptor is the Glu115. The 268-residue stretch at 121 to 388 (DADRGTLCVS…APIRTPRGRD (268 aa)) folds into the Radical SAM core domain. Cysteines 128 and 393 form a disulfide. Positions 135, 139, and 142 each coordinate [4Fe-4S] cluster. S-adenosyl-L-methionine contacts are provided by residues 217–218 (GE), Ser249, 271–273 (SLH), and Asn350. Cys393 serves as the catalytic S-methylcysteine intermediate.

It belongs to the radical SAM superfamily. RlmN family. [4Fe-4S] cluster serves as cofactor.

It localises to the cytoplasm. It carries out the reaction adenosine(2503) in 23S rRNA + 2 reduced [2Fe-2S]-[ferredoxin] + 2 S-adenosyl-L-methionine = 2-methyladenosine(2503) in 23S rRNA + 5'-deoxyadenosine + L-methionine + 2 oxidized [2Fe-2S]-[ferredoxin] + S-adenosyl-L-homocysteine. It catalyses the reaction adenosine(37) in tRNA + 2 reduced [2Fe-2S]-[ferredoxin] + 2 S-adenosyl-L-methionine = 2-methyladenosine(37) in tRNA + 5'-deoxyadenosine + L-methionine + 2 oxidized [2Fe-2S]-[ferredoxin] + S-adenosyl-L-homocysteine. Specifically methylates position 2 of adenine 2503 in 23S rRNA and position 2 of adenine 37 in tRNAs. m2A2503 modification seems to play a crucial role in the proofreading step occurring at the peptidyl transferase center and thus would serve to optimize ribosomal fidelity. The polypeptide is Dual-specificity RNA methyltransferase RlmN (Sphingopyxis alaskensis (strain DSM 13593 / LMG 18877 / RB2256) (Sphingomonas alaskensis)).